Consider the following 234-residue polypeptide: GTP-binding protein ypt4 (234 aa).

16 to 23 (GPSGTGKS) contacts GTP. An Effector region motif is present at residues 39 to 47 (SHTVGIDFA). Residue 68–72 (DTAGQ) coordinates GTP. Residues C233 and C234 are each lipidated (S-geranylgeranyl cysteine).

This sequence belongs to the small GTPase superfamily. Rab family.

It localises to the cell membrane. The polypeptide is GTP-binding protein ypt4 (ypt4) (Schizosaccharomyces pombe (strain 972 / ATCC 24843) (Fission yeast)).